The chain runs to 318 residues: Homeobox protein Nkx-2.5 (318 aa).

A DNA-binding region (homeobox) is located at residues 137 to 196; that stretch reads RRKPRVLFSQAQVYELERRFKQQRYLSAPERDQLASVLKLTSTQVKIWFQNRRYKCKRQR.

Belongs to the NK-2 homeobox family. As to quaternary structure, homodimer (via the homeobox); binds DNA as homodimer. Interacts (via the homeobox) with TBX5 (via the T-box); this complex binds DNA. Interacts with HIPK1 and HIPK2, but not HIPK3. Interacts with the C-terminal zinc finger of GATA4 through its homeobox domain. Also interacts with JARID2 which represses its ability to activate transcription of ANF. Interacts with FBLIM1. Interacts with TBX18. Interacts with histone methyltransferase NSD2 (via HMG box). Interacts with NEDD9. Interacts with TBX1. As to expression, predominantly in the adult and embryonic heart, and to a lesser extent in lingual muscle, spleen and stomach.

The protein resides in the nucleus. Its function is as follows. Transcription factor required for the development of the heart and the spleen. During heart development, acts as a transcriptional activator of NPPA/ANF in cooperation with GATA4. May cooperate with TBX2 to negatively modulate expression of NPPA/ANF in the atrioventricular canal. Binds to the core DNA motif of NPPA promoter. Together with PBX1, required for spleen development through a mechanism that involves CDKN2B repression. Positively regulates transcription of genes such as COL3A1 and MMP2, resulting in increased pulmonary endothelial fibrosis in response to hypoxia. This chain is Homeobox protein Nkx-2.5 (Nkx2-5), found in Mus musculus (Mouse).